The sequence spans 612 residues: UvrABC system protein C (612 aa).

In terms of domain architecture, GIY-YIG spans 15-93 (HLPGVYRMYD…IKQHQPKYNV (79 aa)). The region spanning 203–238 (SQVIDYLMQKMEIAASELDFETAARFRDQIQSVRAV) is the UVR domain.

It belongs to the UvrC family. As to quaternary structure, interacts with UvrB in an incision complex.

Its subcellular location is the cytoplasm. Functionally, the UvrABC repair system catalyzes the recognition and processing of DNA lesions. UvrC both incises the 5' and 3' sides of the lesion. The N-terminal half is responsible for the 3' incision and the C-terminal half is responsible for the 5' incision. In Haemophilus ducreyi (strain 35000HP / ATCC 700724), this protein is UvrABC system protein C.